A 1096-amino-acid polypeptide reads, in one-letter code: MASEQLMSPASGGGRYFQMQPEQFPSMVSSLFSFAPAPTQETNRIFEELPKAVIVSVSRPDAGDISPVLLSYTIECQYKQFKWQLVKKASQVFYLHFALKKRAFIEEIHEKQEQVKEWLQNLGIGDHPPVVQDEDADEVPLHQDESAKNRDVPSSAALPVIRPLGRQQSISVRGKHAMQEYLNHFLGNLDIVNSREVCRFLEVSMLSFSPEYGPKLKEDYIMVKHLPKFSKSDDDSNRCCGCCWFCCCNDNWQKVWGVLKPGFLALLEDPFDAKLLDIIVFDVLPVSNGNDGVDISLAVELKDHNPLRHAFKVTSGNRSIRIRAKNSAKVKDWVASINDAALRPPEGWCHPHRFGSYAPPRGLTDDGSQAQWFVDGGAAFAAIAAAIENAKSEIFICGWWVCPELYLRRPFDPHTSSRLDNLLENKAKQGVQIYILIYKEVALALKINSVYSKRRLLGIHENVRVLRYPDHFSSGVYLWSHHEKLVIVDNQVCFIGGLDLCFGRYDTFEHKVGDNPSVTWPGKDYYNPRESEPNTWEDALKDELERKKHPRMPWHDVHCALWGPPCRDVARHFVQRWNYAKRNKAPYEDSIPLLMPQHHMVIPHYMGRQEESDIESKKEEDSIRGIRRDDSFSSRSSLQDIPLLLPHEPVDQDGSSGGHKENGTNNRNGPFSFRKSKIEPVDGDTPMRGFVDDRNGLDLPVAKRGSNAIDSEWWETQDHDYQVGSPDETGQVGPRTSCRCQIIRSVSQWSAGTSQVEESIHSAYRSLIDKAEHFIYIENQFFISGLSGDDTVKNRVLEALYKRILRAHNEKKIFRVVVVIPLLPGFQGGIDDSGAASVRAIMHWQYRTIYRGHNSILTNLYNTIGVKAHDYISFYGLRAYGKLSEDGPVATSQVYVHSKIMIVDDRAALIGSANINDRSLLGSRDSEIGVLIEDTELVDSRMAGKPWKAGKFSSSLRLSLWSEHLGLRTGEIDQIIDPVSDSTYKEIWMATAKTNTMIYQDVFSCVPNDLIHSRMAFRQSLSYWKEKLGHTTIDLGIAPEKLESYHNGDIKRSDPMDRLKAIKGHLVSFPLDFMCKEDLRPVFNESEYYASPQVFH.

Ala-2 bears the N-acetylalanine mark. A PX domain is found at 50–204; it reads PKAVIVSVSR…REVCRFLEVS (155 aa). Residues 131 to 152 are disordered; the sequence is VQDEDADEVPLHQDESAKNRDV. The segment covering 139 to 151 has biased composition (basic and acidic residues); it reads VPLHQDESAKNRD. The 109-residue stretch at 234 to 342 folds into the PH domain; that stretch reads DDSNRCCGCC…WVASINDAAL (109 aa). The region spanning 477–504 is the PLD phosphodiesterase 1 domain; the sequence is YLWSHHEKLVIVDNQVCFIGGLDLCFGR. Catalysis depends on residues His-482, Lys-484, and Asp-489. A compositionally biased stretch (basic and acidic residues) spans 607–632; sequence GRQEESDIESKKEEDSIRGIRRDDSF. Residues 607-691 are disordered; that stretch reads GRQEESDIES…DGDTPMRGFV (85 aa). The PLD phosphodiesterase 2 domain maps to 892–919; it reads SQVYVHSKIMIVDDRAALIGSANINDRS. Active-site residues include His-897, Lys-899, and Asp-904.

This sequence belongs to the phospholipase D family. PXPH-PLD subfamily. Does not require Ca(2+) or any other cation for activity. serves as cofactor. Expressed in inflorescences, flowers, siliques, stems, leaves, and roots. Highest expression in roots.

The protein resides in the cytoplasmic vesicle. It carries out the reaction a 1,2-diacyl-sn-glycero-3-phosphocholine + H2O = a 1,2-diacyl-sn-glycero-3-phosphate + choline + H(+). Its activity is regulated as follows. Calcium-independent and PIP2-dependent. Functionally, hydrolyzes glycerol-phospholipids at the terminal phosphodiesteric bond to generate phosphatidic acids (PA). Phosphatidylcholine-selective. Regulates root-hair morphogenesis. Contributes to the supply of inorganic phosphorus for cell metabolism and diacylglycerol moieties for galactolipid synthesis in phosphorus-starved roots. Involved in root elongation during phosphate limitation. In Arabidopsis thaliana (Mouse-ear cress), this protein is Phospholipase D zeta 1.